Here is a 116-residue protein sequence, read N- to C-terminus: Dynein light chain Tctex-type 3 (116 aa).

3'-nitrotyrosine is present on Tyr-4.

Belongs to the dynein light chain Tctex-type family. In terms of assembly, homodimer. The cytoplasmic dynein 1 complex consists of two catalytic heavy chains (HCs) and a number of non-catalytic subunits presented by intermediate chains (ICs), light intermediate chains (LICs) and light chains (LCs); the composition seems to vary in respect to the IC, LIC and LC composition. The heavy chain homodimer serves as a scaffold for the probable homodimeric assembly of the respective non-catalytic subunits. The ICs and LICs bind directly to the HC dimer and the LCs assemble on the IC dimer. DYNLT1 and DYNLT3 compete for association with dynein IC (DYNC1I1 or DYNC1I2). Self-associates. Interacts with DYNC1I1 and DYNC1I2. Interacts with BUB3. Interacts with SATB1 in nucleus to form complex with matrix attachment regions (MARs) of DNA.

The protein localises to the nucleus. It localises to the cytoplasm. The protein resides in the cytoskeleton. It is found in the chromosome. Its subcellular location is the centromere. The protein localises to the kinetochore. Functionally, acts as one of several non-catalytic accessory components of the cytoplasmic dynein 1 complex that are thought to be involved in linking dynein to cargos and to adapter proteins that regulate dynein function. Cytoplasmic dynein 1 acts as a motor for the intracellular retrograde motility of vesicles and organelles along microtubules. Probably binds BUB3 as part of transport cargo. Required for the efficient progression through mitosis. This is Dynein light chain Tctex-type 3 (DYNLT3) from Homo sapiens (Human).